A 206-amino-acid polypeptide reads, in one-letter code: Homoserine/homoserine lactone efflux protein (206 aa).

6 helical membrane passes run 5 to 25 (WWFA…SGAI), 45 to 65 (GLQT…GTLF), 68 to 88 (SLIA…WLGI), 117 to 137 (FVNL…PQFI), 148 to 168 (LILG…YATL), and 182 to 202 (MKAL…LLAS).

The protein belongs to the Rht family.

It is found in the cell membrane. Functionally, conducts the efflux of homoserine and homoserine lactone. This Salmonella typhi protein is Homoserine/homoserine lactone efflux protein (rhtB).